Reading from the N-terminus, the 530-residue chain is Cytochrome P450 monooxygenase apf7 (530 aa).

Residues 6-26 form a helical membrane-spanning segment; the sequence is VSPVSIWVFVIYAVTIIIAIY. An N-linked (GlcNAc...) asparagine glycan is attached at asparagine 85. Cysteine 464 lines the heme pocket.

It belongs to the cytochrome P450 family. The cofactor is heme.

It localises to the membrane. It participates in secondary metabolite biosynthesis. Functionally, cytochrome P450 monooxygenase; part of the gene cluster that mediates the biosynthesis of the cyclic tetrapeptide apicidin F (APF). The non-ribosomal peptide synthetase apf1 incorporates four different amino acids to produce apicidin F: L-phenylalanine, D-pipecolic acid (D-pip), N-methoxy-L-tryptophan and L-2-aminooctanedioic acid. L-Phenylalanine is the only proteinogenic amino acid directly used by apf1. The 3 other apf1 substrates are non-proteinogenic and have to be modified by other enzymes of the cluster. Lysine is converted to delta-1-pyrroline-5-carboxylate (P5C) which is reduced to L-pipecolic acid (L-pip) by apf3. L-pip is epimerized to D-pip, probably by apf1 activity, prior to incorporation. L-Tryptophan is N-oxidyzed by one of the cytochrome P450 monooxygenases (apf7 or apf8), and further methylated at the hydroxy group by the O-methyltransferase apf6 to yield N-methoxy-L-tryptophan. The synthesis of the fourth apf1 substrate is more complex. The fatty acid synthase apf5 is involved in the synthesis of the octanoic acid backbone of L-2-aminooctanedioic acid by fixing one acetyl-CoA unit and three malonyl-CoA units. Then one of the cytochrome P450 monooxygenases (apf7 or apf8) may oxidize this backbone to 2-oxooctanoic acid. The aminotransferase apf4 is predicted to catalyze the exchange of the keto group with an amino group. The next step would be the oxidation of 2-aminooctanoic acid by one of the cytochrome P450 monooxygenases (apf7 or apf8). The last step is the oxidation of 2-amino-8-hydroxyoctanoic acid to 2-aminooctanedioic acid is catalyzed by the FAD-dependent monooxygenase apf9. This is Cytochrome P450 monooxygenase apf7 from Gibberella fujikuroi (strain CBS 195.34 / IMI 58289 / NRRL A-6831) (Bakanae and foot rot disease fungus).